The chain runs to 273 residues: 4-hydroxy-tetrahydrodipicolinate reductase (273 aa).

Residue 12–17 (GANGRM) coordinates NAD(+). Arginine 39 is a binding site for NADP(+). Residues 102–104 (GTT) and 126–129 (AANF) each bind NAD(+). Histidine 159 functions as the Proton donor/acceptor in the catalytic mechanism. Histidine 160 lines the (S)-2,3,4,5-tetrahydrodipicolinate pocket. The active-site Proton donor is the lysine 163. 169 to 170 (GT) serves as a coordination point for (S)-2,3,4,5-tetrahydrodipicolinate.

It belongs to the DapB family. Homotetramer.

Its subcellular location is the cytoplasm. It carries out the reaction (S)-2,3,4,5-tetrahydrodipicolinate + NAD(+) + H2O = (2S,4S)-4-hydroxy-2,3,4,5-tetrahydrodipicolinate + NADH + H(+). It catalyses the reaction (S)-2,3,4,5-tetrahydrodipicolinate + NADP(+) + H2O = (2S,4S)-4-hydroxy-2,3,4,5-tetrahydrodipicolinate + NADPH + H(+). It participates in amino-acid biosynthesis; L-lysine biosynthesis via DAP pathway; (S)-tetrahydrodipicolinate from L-aspartate: step 4/4. Catalyzes the conversion of 4-hydroxy-tetrahydrodipicolinate (HTPA) to tetrahydrodipicolinate. The polypeptide is 4-hydroxy-tetrahydrodipicolinate reductase (Cronobacter sakazakii (strain ATCC BAA-894) (Enterobacter sakazakii)).